Consider the following 882-residue polypeptide: HTH-type transcriptional regulator AlkS (882 aa).

ATP is bound at residue 51–58 (APPGYGKT). Residues 815-880 (ENKADALLTR…QATIEAERQG (66 aa)) enclose the HTH luxR-type domain. The segment at residues 839–858 (NKQIATNMHVTEDAIKWHMR) is a DNA-binding region (H-T-H motif).

It participates in hydrocarbon metabolism; alkane degradation. Functionally, this protein activates the expression of alkBFGHJKL operon in the presence of alkanes. This chain is HTH-type transcriptional regulator AlkS (alkS), found in Ectopseudomonas oleovorans (Pseudomonas oleovorans).